The primary structure comprises 281 residues: Acetyl-coenzyme A carboxylase carboxyl transferase subunit beta (281 aa).

Positions 24-281 constitute a CoA carboxyltransferase N-terminal domain; the sequence is GLWYKSPKGK…TKLLTMLANN (258 aa).

Belongs to the AccD/PCCB family. As to quaternary structure, acetyl-CoA carboxylase is a heterohexamer composed of biotin carboxyl carrier protein (AccB), biotin carboxylase (AccC) and two subunits each of ACCase subunit alpha (AccA) and ACCase subunit beta (AccD).

Its subcellular location is the cytoplasm. The catalysed reaction is N(6)-carboxybiotinyl-L-lysyl-[protein] + acetyl-CoA = N(6)-biotinyl-L-lysyl-[protein] + malonyl-CoA. It functions in the pathway lipid metabolism; malonyl-CoA biosynthesis; malonyl-CoA from acetyl-CoA: step 1/1. Functionally, component of the acetyl coenzyme A carboxylase (ACC) complex. Biotin carboxylase (BC) catalyzes the carboxylation of biotin on its carrier protein (BCCP) and then the CO(2) group is transferred by the transcarboxylase to acetyl-CoA to form malonyl-CoA. The polypeptide is Acetyl-coenzyme A carboxylase carboxyl transferase subunit beta (Amoebophilus asiaticus (strain 5a2)).